The sequence spans 137 residues: Prefoldin subunit alpha (137 aa).

This sequence belongs to the prefoldin subunit alpha family. Heterohexamer of two alpha and four beta subunits.

It localises to the cytoplasm. Its function is as follows. Molecular chaperone capable of stabilizing a range of proteins. Seems to fulfill an ATP-independent, HSP70-like function in archaeal de novo protein folding. This is Prefoldin subunit alpha (pfdA) from Archaeoglobus fulgidus (strain ATCC 49558 / DSM 4304 / JCM 9628 / NBRC 100126 / VC-16).